Here is a 206-residue protein sequence, read N- to C-terminus: ATP-dependent Clp protease proteolytic subunit (206 aa).

Catalysis depends on S101, which acts as the Nucleophile. H126 is a catalytic residue.

This sequence belongs to the peptidase S14 family. As to quaternary structure, component of the chloroplastic Clp protease core complex.

The protein resides in the plastid. The protein localises to the chloroplast stroma. It carries out the reaction Hydrolysis of proteins to small peptides in the presence of ATP and magnesium. alpha-casein is the usual test substrate. In the absence of ATP, only oligopeptides shorter than five residues are hydrolyzed (such as succinyl-Leu-Tyr-|-NHMec, and Leu-Tyr-Leu-|-Tyr-Trp, in which cleavage of the -Tyr-|-Leu- and -Tyr-|-Trp bonds also occurs).. Cleaves peptides in various proteins in a process that requires ATP hydrolysis. Has a chymotrypsin-like activity. Plays a major role in the degradation of misfolded proteins. The sequence is that of ATP-dependent Clp protease proteolytic subunit from Solanum lycopersicum (Tomato).